Reading from the N-terminus, the 234-residue chain is Orotate phosphoribosyltransferase (234 aa).

Lysine 37 contacts 5-phospho-alpha-D-ribose 1-diphosphate. An orotate-binding site is contributed by 45–46; the sequence is FF. 5-phospho-alpha-D-ribose 1-diphosphate is bound by residues 83-84, arginine 109, lysine 110, lysine 113, histidine 115, and 134-142; these read YK and DDVISAGTS. Orotate-binding residues include serine 138 and arginine 166.

It belongs to the purine/pyrimidine phosphoribosyltransferase family. PyrE subfamily. Homodimer. Requires Mg(2+) as cofactor.

It carries out the reaction orotidine 5'-phosphate + diphosphate = orotate + 5-phospho-alpha-D-ribose 1-diphosphate. Its pathway is pyrimidine metabolism; UMP biosynthesis via de novo pathway; UMP from orotate: step 1/2. Functionally, catalyzes the transfer of a ribosyl phosphate group from 5-phosphoribose 1-diphosphate to orotate, leading to the formation of orotidine monophosphate (OMP). The chain is Orotate phosphoribosyltransferase from Methylibium petroleiphilum (strain ATCC BAA-1232 / LMG 22953 / PM1).